A 703-amino-acid polypeptide reads, in one-letter code: NADH-quinone oxidoreductase chain 12 (703 aa).

Transmembrane regions (helical) follow at residues 4 to 24 (FVLF…RAIG), 30 to 50 (YLTT…FLSF), 79 to 99 (LTAI…MYSL), 116 to 136 (ARFF…VTAD), 138 to 158 (LLQM…LIGF), 179 to 199 (GDFG…SVQF), 224 to 244 (ANLL…QLLL), 256 to 276 (TPVS…FLVC), 290 to 310 (NFIV…GLVQ), 325 to 345 (LGYM…FHLL), 346 to 366 (THAF…HAMH), 381 to 401 (IPLT…VGIP), 415 to 435 (AIIE…VIAA), 475 to 495 (LGVL…PFFG), 580 to 600 (VSPF…YIAN), and 679 to 699 (LFHY…WVMM).

The protein belongs to the complex I subunit 5 family. NDH-1 is composed of at least 14 different subunits, Nqo1 to Nqo14. The complex has a L-shaped structure, with the hydrophobic arm (subunits Nqo7, Nqo8, Nqo10 to Nqo14) embedded in the inner membrane and the hydrophilic peripheral arm (subunits Nqo1 to Nqo6, Nqo9) protruding into the bacterial cytoplasm. The hydrophilic domain contains all the redox centers.

It is found in the cell inner membrane. It catalyses the reaction a quinone + NADH + 5 H(+)(in) = a quinol + NAD(+) + 4 H(+)(out). Functionally, NDH-1 shuttles electrons from NADH, via FMN and iron-sulfur (Fe-S) centers, to quinones in the respiratory chain. The immediate electron acceptor for the enzyme in this species is believed to be ubiquinone. Couples the redox reaction to proton translocation (for every two electrons transferred, four hydrogen ions are translocated across the cytoplasmic membrane), and thus conserves the redox energy in a proton gradient. The protein is NADH-quinone oxidoreductase chain 12 of Paracoccus denitrificans.